The chain runs to 266 residues: Undecaprenyl-diphosphatase (266 aa).

The next 8 helical transmembrane spans lie at 1 to 21, 39 to 59, 87 to 107, 111 to 131, 149 to 169, 183 to 203, 218 to 238, and 246 to 266; these read METF…FLPI, QGFS…VIYF, WWII…KDFI, LRNT…LWWA, ALLI…RSGA, AAAK…AILV, ALGI…YYFL, and MTPF…LILW.

The protein belongs to the UppP family.

It localises to the cell inner membrane. It carries out the reaction di-trans,octa-cis-undecaprenyl diphosphate + H2O = di-trans,octa-cis-undecaprenyl phosphate + phosphate + H(+). In terms of biological role, catalyzes the dephosphorylation of undecaprenyl diphosphate (UPP). Confers resistance to bacitracin. The sequence is that of Undecaprenyl-diphosphatase from Shewanella denitrificans (strain OS217 / ATCC BAA-1090 / DSM 15013).